The following is a 517-amino-acid chain: Cytochrome P450 52A8 (517 aa).

Position 464 (C464) interacts with heme.

It belongs to the cytochrome P450 family. Heme is required as a cofactor.

Together with an NADPH cytochrome P450 the enzyme system catalyzes the terminal hydroxylation as the first step in the assimilation of alkanes and fatty acids. Preferentially hydroxylates lauric acid. The chain is Cytochrome P450 52A8 (CYP52A8) from Candida tropicalis (Yeast).